We begin with the raw amino-acid sequence, 251 residues long: Hydroxyacylglutathione hydrolase (251 aa).

7 residues coordinate Zn(2+): histidine 53, histidine 55, aspartate 57, histidine 58, histidine 110, aspartate 127, and histidine 165.

Belongs to the metallo-beta-lactamase superfamily. Glyoxalase II family. Monomer. Requires Zn(2+) as cofactor.

The catalysed reaction is an S-(2-hydroxyacyl)glutathione + H2O = a 2-hydroxy carboxylate + glutathione + H(+). It functions in the pathway secondary metabolite metabolism; methylglyoxal degradation; (R)-lactate from methylglyoxal: step 2/2. In terms of biological role, thiolesterase that catalyzes the hydrolysis of S-D-lactoyl-glutathione to form glutathione and D-lactic acid. The polypeptide is Hydroxyacylglutathione hydrolase (Salmonella dublin (strain CT_02021853)).